The primary structure comprises 303 residues: Tyrosine-protein phosphatase 3 (303 aa).

Residues 24 to 292 (YMIIEGLNEE…VFLYTVSQEL (269 aa)) enclose the Tyrosine-protein phosphatase domain. Catalysis depends on Cys-227, which acts as the Phosphocysteine intermediate.

It belongs to the protein-tyrosine phosphatase family. Non-receptor class subfamily.

The protein resides in the cytoplasm. The enzyme catalyses O-phospho-L-tyrosyl-[protein] + H2O = L-tyrosyl-[protein] + phosphate. Contributes to dephosphorylation of tyrosine 15 of cdc2. This Schizosaccharomyces pombe (strain 972 / ATCC 24843) (Fission yeast) protein is Tyrosine-protein phosphatase 3 (pyp3).